A 131-amino-acid polypeptide reads, in one-letter code: Large ribosomal subunit protein bL12c (131 aa).

It belongs to the bacterial ribosomal protein bL12 family. Homodimer. Part of the ribosomal stalk of the 50S ribosomal subunit. Forms a multimeric L10(L12)X complex, where L10 forms an elongated spine to which 2 to 4 L12 dimers bind in a sequential fashion. Binds GTP-bound translation factors.

The protein localises to the plastid. The protein resides in the chloroplast. In terms of biological role, forms part of the ribosomal stalk which helps the ribosome interact with GTP-bound translation factors. Is thus essential for accurate translation. This chain is Large ribosomal subunit protein bL12c, found in Euglena gracilis.